The following is a 574-amino-acid chain: MALKGRALYDFHSENKEEISIQQDEDLVIFSETSLDGWLQGQNSRGETGLFPASYVEIVRSGISTNHADYSSSPAGSPGAQVSLYNSPSVASPARSGGGSGFLSNQGSFEEDDDDDWDDWDDGCTVVEEPRAGGLGTNGHPPLNLSYPGAYPSQHMAFRPKPPLERQDSLASAKRGSVVGRNLNRFSCFVRSGVEAFILGDVPMMAKIAETYSIEMGPRGPQWKANPHPFACSVEDPTKQTKFKGIKSYISYKLTPTHAASPVYRRYKHFDWLYNRLLHKFTVISVPHLPEKQATGRFEEDFIEKRKRRLILWMDHMTSHPVLSQYEGFQHFLSCLDDKQWKMGKRRAEKDEMVGASFLLTFQIPTEHQDLQDVEDRVDTFKAFSKKMDDSVLQLSTVASELVRKHVGGFRKEFQKLGSAFQAISHSFQMDPPFCSEALNSAISHTGRTYEAIGEMFAEQPKNDLFQMLDTLSLYQGLLSNFPDIIHLQKGAFAKVKESQRMSDEGRMVQDEADGIRRRCRVVGFALQAEMNHFHQRRELDFKHMMQNYLRQQILFYQRVGQQLEKTLRMYDNL.

The SH3 domain occupies M1 to S61. The disordered stretch occupies residues A68–D119. Phosphoserine is present on residues S77 and S92. Acidic residues predominate over residues F109–D119. A PX domain is found at F230–Q340. The region spanning L371 to L574 is the BAR domain.

Belongs to the sorting nexin family. In terms of assembly, homodimer (via BAR domain). Interacts with ADAM15. Interacts with FASLG. Interacts (via SH3 domain) with DNM1 and DNM2. Interacts with WASL. Interacts with FCHSD1 (via the F-BAR domain). Phosphorylated. Detected in heart and pancreas.

It is found in the cytoplasm. It localises to the cytosol. Its subcellular location is the membrane. The protein localises to the cytoplasmic vesicle membrane. Functionally, plays a role in the reorganization of the cytoskeleton, endocytosis and cellular vesicle trafficking via its interactions with membranes, WASL, DNM1 and DNM2. Acts both during interphase and at the end of mitotic cell divisions. Required for efficient progress through mitosis and cytokinesis. Required for normal formation of the cleavage furrow at the end of mitosis. Modulates endocytosis of cell-surface proteins, such as APP and PRNP; this then modulates the secretion of APP and PRNP peptides. Promotes membrane tubulation (in vitro). May promote the formation of macropinosomes. This Homo sapiens (Human) protein is Sorting nexin-33 (SNX33).